The following is a 108-amino-acid chain: uncharacterized protein (108 aa).

Residues Phe81–Tyr108 are disordered. The segment covering Gly97 to Tyr108 has biased composition (acidic residues).

This is an uncharacterized protein from Saccharomyces cerevisiae (strain ATCC 204508 / S288c) (Baker's yeast).